The following is a 233-amino-acid chain: Large ribosomal subunit protein uL1 (233 aa).

Belongs to the universal ribosomal protein uL1 family. Part of the 50S ribosomal subunit.

Functionally, binds directly to 23S rRNA. The L1 stalk is quite mobile in the ribosome, and is involved in E site tRNA release. Protein L1 is also a translational repressor protein, it controls the translation of the L11 operon by binding to its mRNA. This Campylobacter concisus (strain 13826) protein is Large ribosomal subunit protein uL1.